A 401-amino-acid polypeptide reads, in one-letter code: MGRAKKVVLAYSGGVDTSVCIPYLKHEWGVEEVITFAADLGQGDELDPIRLKALDAGASQSLVGDLIEPFVEQFALPAIRANALYEGRYPLSTALARPLIARQLVEVAREVGADAVAHGCTGKGNDQVRFDLAIAALAPDLKVLTPAREWSMSREEAIAYGERCGIPAPVSKKSPYSIDLNLLGRSIEAGPLEDLMVAPPEEVFAMTSSIDAAPSQAQDIEISFEAGNPVAIDGVRLDSVGLIKEANRLAGRHGFGRLDIIENRVVGIKSREIYETPGLLLLIRAHQELESLTLAADVLRMKRQLEMQWAELVYQGLWFSPLKDALDGFMDRTQTYVNGLVRIRLQKGNAMVIGRSSDTNSLYISEMATYGSEDNFDHRAAEGFIYIWGLPSRLWAAARRG.

Residues 10 to 18 and Ala38 each bind ATP; that span reads AYSGGVDTS. Tyr89 serves as a coordination point for L-citrulline. Gly119 lines the ATP pocket. L-aspartate-binding residues include Thr121, Asn125, and Asp126. Asn125 provides a ligand contact to L-citrulline. The L-citrulline site is built by Arg129, Ser177, Ser186, Glu262, and Tyr274.

It belongs to the argininosuccinate synthase family. Type 1 subfamily. As to quaternary structure, homotetramer.

The protein localises to the cytoplasm. It catalyses the reaction L-citrulline + L-aspartate + ATP = 2-(N(omega)-L-arginino)succinate + AMP + diphosphate + H(+). It functions in the pathway amino-acid biosynthesis; L-arginine biosynthesis; L-arginine from L-ornithine and carbamoyl phosphate: step 2/3. The polypeptide is Argininosuccinate synthase (Prochlorococcus marinus (strain MIT 9313)).